A 545-amino-acid chain; its full sequence is Sulfite oxidase, mitochondrial (545 aa).

Residues 1–79 constitute a mitochondrion transit peptide; that stretch reads MLLLHRAVVL…YQDHRCRAAQ (79 aa). A Cytochrome b5 heme-binding domain is found at 82–161; the sequence is THIYTKEEVS…LAQYKIGELN (80 aa). His118 is a binding site for heme b. A Phosphoserine modification is found at Ser123. Heme b contacts are provided by His143, Gln145, and His147. A hinge region spans residues 165-174; sequence KVAPTVETSD. The moco domain stretch occupies residues 175–401; the sequence is PYADDPVRHP…YSHWQRRDYK (227 aa). Residues 215–219, Cys264, Asp322, His361, Arg366, and 377–379 each bind Mo-molybdopterin; these read FTRNH and HVK. The segment at 402-538 is homodimerization; sequence GFSPSVDWET…RGVLSNAWHR (137 aa).

Homodimer. The cofactor is heme b. Mo-molybdopterin is required as a cofactor.

It localises to the mitochondrion intermembrane space. The enzyme catalyses sulfite + O2 + H2O = sulfate + H2O2. Its pathway is energy metabolism; sulfur metabolism. Functionally, catalyzes the oxidation of sulfite to sulfate, the terminal reaction in the oxidative degradation of sulfur-containing amino acids. The polypeptide is Sulfite oxidase, mitochondrial (SUOX) (Homo sapiens (Human)).